Reading from the N-terminus, the 338-residue chain is Cytochrome P450 monooxygenase easK (338 aa).

An N-terminal signal peptide occupies residues 1-16; it reads MLLLTFTLPVVTLLLA. N-linked (GlcNAc...) asparagine glycosylation is found at Asn240 and Asn327.

This sequence belongs to the cytochrome P450 family. Heme is required as a cofactor.

The protein operates within alkaloid biosynthesis; ergot alkaloid biosynthesis. Its function is as follows. Cytochrome P450 monooxygenase; part of the gene cluster that mediates the biosynthesis of fumiclavanine C, a fungal ergot alkaloid. DmaW catalyzes the first step of ergot alkaloid biosynthesis by condensing dimethylallyl diphosphate (DMAP) and tryptophan to form 4-dimethylallyl-L-tryptophan. The second step is catalyzed by the methyltransferase easF that methylates 4-dimethylallyl-L-tryptophan in the presence of S-adenosyl-L-methionine, resulting in the formation of 4-dimethylallyl-L-abrine. The catalase easC and the FAD-dependent oxidoreductase easE then transform 4-dimethylallyl-L-abrine to chanoclavine-I which is further oxidized by EasD in the presence of NAD(+), resulting in the formation of chanoclavine-I aldehyde. EasA reduces chanoclavine-I aldehyde to dihydrochanoclavine-I aldehyde that spontaneously dehydrates to form 6,8-dimethyl-6,7-didehydroergoline. EasG then catalyzes the reduction of 6,8-dimethyl-6,7-didehydroergoline to form festuclavine. Hydrolysis of festuclavine by easM then leads to the formation of fumigaclavine B which is in turn acetylated by easN to fumigaclavine A. Finally, easL catalyzes the conversion of fumigaclavine A into fumigaclavine C by attaching a dimethylallyl moiety to C-2 of the indole nucleus. The role of the cytochrome P450 monooxygenase easK within the cluster has not been identified yet. The protein is Cytochrome P450 monooxygenase easK of Aspergillus fumigatus (strain ATCC MYA-4609 / CBS 101355 / FGSC A1100 / Af293) (Neosartorya fumigata).